The following is a 284-amino-acid chain: N-methyltransferase sirN (284 aa).

Belongs to the methyltransferase superfamily. LaeA methyltransferase family.

It participates in mycotoxin biosynthesis. Functionally, N-methyltransferase; part of the gene cluster that mediates the biosynthesis of sirodesmin PL, an epipolythiodioxopiperazine (ETP) characterized by a disulfide bridged cyclic dipeptide and that acts as a phytotoxin which is involved in the blackleg didease of canola. SirD catalyzes the O-prenylation of L-tyrosine (L-Tyr) in the presence of dimethylallyl diphosphate (DMAPP) to yield 4-O-dimethylallyl-L-Tyr, and therefore represents probably the first pathway-specific enzyme in the biosynthesis of sirodesmin PL. 4-O-dimethylallyl-L-Tyr, then undergoes condensation with L-Ser in a reaction catalyzed by the non-ribosomal peptide synthase sirP to form the diketopiperazine (DKP) backbone. Further bishydroxylation of the DKP performed by the cytochrome P450 monooxygenase sirC leads to the production of the intermediate phomamide. This step is essential to form the reactive thiol group required for toxicity of sirodesmin PL. The next steps of sirodesmin biosynthesis are not well understood yet but some predictions could be made from intermediate compounds identification. Phomamide is converted into phomalizarine via oxidation, probably by sirT. Further oxidation, methylation (by sirM or sirN) and reduction steps convert phomalizarine to deacetyl sirodesmin. Finally, acetyltransferase sirH probably acetylates deacetyl sirodesmin to produce sirodesmin PL. This is N-methyltransferase sirN from Leptosphaeria maculans (Blackleg fungus).